Consider the following 456-residue polypeptide: Cysteine--tRNA ligase (456 aa).

C28 provides a ligand contact to Zn(2+). The 'HIGH' region signature appears at 30-40 (ITVYDHCHLGH). C209, H234, and E238 together coordinate Zn(2+). The 'KMSKS' region motif lies at 266-270 (KMAKS). K269 contributes to the ATP binding site.

It belongs to the class-I aminoacyl-tRNA synthetase family. In terms of assembly, monomer. Requires Zn(2+) as cofactor.

Its subcellular location is the cytoplasm. The enzyme catalyses tRNA(Cys) + L-cysteine + ATP = L-cysteinyl-tRNA(Cys) + AMP + diphosphate. This chain is Cysteine--tRNA ligase, found in Legionella pneumophila (strain Paris).